The chain runs to 641 residues: Fructose-1,6-bisphosphatase class 3 (641 aa).

It belongs to the FBPase class 3 family. It depends on Mn(2+) as a cofactor.

It carries out the reaction beta-D-fructose 1,6-bisphosphate + H2O = beta-D-fructose 6-phosphate + phosphate. Its pathway is carbohydrate biosynthesis; gluconeogenesis. The polypeptide is Fructose-1,6-bisphosphatase class 3 (Ligilactobacillus salivarius (strain UCC118) (Lactobacillus salivarius)).